The sequence spans 876 residues: Alanine--tRNA ligase (876 aa).

4 residues coordinate Zn(2+): His564, His568, Cys666, and His670.

This sequence belongs to the class-II aminoacyl-tRNA synthetase family. Homotetramer. Zn(2+) is required as a cofactor.

The protein resides in the cytoplasm. It catalyses the reaction tRNA(Ala) + L-alanine + ATP = L-alanyl-tRNA(Ala) + AMP + diphosphate. Functionally, catalyzes the attachment of alanine to tRNA(Ala) in a two-step reaction: alanine is first activated by ATP to form Ala-AMP and then transferred to the acceptor end of tRNA(Ala). Also edits incorrectly charged Ser-tRNA(Ala) and Gly-tRNA(Ala) via its editing domain. This Salmonella typhi protein is Alanine--tRNA ligase.